The primary structure comprises 546 residues: ATP synthase subunit alpha (546 aa).

173–180 (GDRQTGKT) contacts ATP. A disordered region spans residues 520–546 (VDKKTAPKSVTPVDQEQIKAGKAQEKK). The segment covering 535-546 (EQIKAGKAQEKK) has biased composition (basic and acidic residues).

This sequence belongs to the ATPase alpha/beta chains family. F-type ATPases have 2 components, CF(1) - the catalytic core - and CF(0) - the membrane proton channel. CF(1) has five subunits: alpha(3), beta(3), gamma(1), delta(1), epsilon(1). CF(0) has three main subunits: a(1), b(2) and c(9-12). The alpha and beta chains form an alternating ring which encloses part of the gamma chain. CF(1) is attached to CF(0) by a central stalk formed by the gamma and epsilon chains, while a peripheral stalk is formed by the delta and b chains.

The protein resides in the cell membrane. The enzyme catalyses ATP + H2O + 4 H(+)(in) = ADP + phosphate + 5 H(+)(out). Functionally, produces ATP from ADP in the presence of a proton gradient across the membrane. The alpha chain is a regulatory subunit. This is ATP synthase subunit alpha from Bifidobacterium animalis subsp. lactis (strain AD011).